We begin with the raw amino-acid sequence, 301 residues long: Rhodopsin (301 aa).

At 1–18 (LHMIHLHWYQYPPMNPMM) the chain is on the extracellular side. Residues 19–43 (YPLLLIFMLFTGILCLAGNFVTIWV) form a helical membrane-spanning segment. Residues 44–55 (FMNTKSLRTPAN) lie on the Cytoplasmic side of the membrane. Residues 56 to 78 (LLVVNLAMSDFLMMFTMFPPMMV) form a helical membrane-spanning segment. Residues 79–92 (TCYYHTWTLGPTFC) lie on the Extracellular side of the membrane. Residues C92 and C169 are joined by a disulfide bond. A helical transmembrane segment spans residues 93 to 115 (QVYAFLGNLCGCASIWTMVFITF). Residues 116-118 (DRY) carry the 'Ionic lock' involved in activated form stabilization motif. The Cytoplasmic portion of the chain corresponds to 116–134 (DRYNVIVKGVAGEPLSTKK). The helical transmembrane segment at 135 to 155 (ASLWILSVWVLSTAWCIAPFF) threads the bilayer. Topologically, residues 156 to 182 (GWNHYVPEGNLTGCGTDYLSEDILSRS) are extracellular. An N-linked (GlcNAc...) asparagine glycan is attached at N165. Residues 183 to 204 (YLYIYSTWVYFLPLAITIYCYV) traverse the membrane as a helical segment. The Cytoplasmic segment spans residues 205 to 245 (FIIKAVAAHEKGMRDQAKKMGIKSLRNEEAQKTSAECRLAK). The chain crosses the membrane as a helical span at residues 246-267 (NAMTTVALWFIAWTPCLLINWV). The Extracellular segment spans residues 268–278 (GMFARSYLSPV). The helical transmembrane segment at 279 to 300 (YTIWGYVFAKANAVYNPIVYAI) threads the bilayer. N6-(retinylidene)lysine is present on K288.

Belongs to the G-protein coupled receptor 1 family. Opsin subfamily. In terms of assembly, homodimer. Interacts with GNAQ. Contains one covalently linked retinal chromophore.

The protein localises to the cell projection. It localises to the rhabdomere membrane. In terms of biological role, photoreceptor required for image-forming vision at low light intensity. Can use both retinal and 3-dehydroretinal as visual pigment. Light-induced isomerization of 11-cis to all-trans retinal triggers a conformational change that activates signaling via G-proteins. Signaling via GNAQ probably mediates the activation of phospholipase C. This Cambarus hubrichti (Salem cave crayfish) protein is Rhodopsin (RHO).